The chain runs to 273 residues: 4-hydroxy-tetrahydrodipicolinate reductase (273 aa).

Residues 12–17 and glutamate 38 contribute to the NAD(+) site; that span reads GAGGRM. Arginine 39 is an NADP(+) binding site. NAD(+) contacts are provided by residues 102–104 and 126–129; these read GTT and AANF. Residue histidine 159 is the Proton donor/acceptor of the active site. Histidine 160 is a (S)-2,3,4,5-tetrahydrodipicolinate binding site. Lysine 163 acts as the Proton donor in catalysis. 169-170 contacts (S)-2,3,4,5-tetrahydrodipicolinate; it reads GT.

The protein belongs to the DapB family. In terms of assembly, homotetramer.

Its subcellular location is the cytoplasm. The catalysed reaction is (S)-2,3,4,5-tetrahydrodipicolinate + NAD(+) + H2O = (2S,4S)-4-hydroxy-2,3,4,5-tetrahydrodipicolinate + NADH + H(+). It catalyses the reaction (S)-2,3,4,5-tetrahydrodipicolinate + NADP(+) + H2O = (2S,4S)-4-hydroxy-2,3,4,5-tetrahydrodipicolinate + NADPH + H(+). It functions in the pathway amino-acid biosynthesis; L-lysine biosynthesis via DAP pathway; (S)-tetrahydrodipicolinate from L-aspartate: step 4/4. Its function is as follows. Catalyzes the conversion of 4-hydroxy-tetrahydrodipicolinate (HTPA) to tetrahydrodipicolinate. This Escherichia fergusonii (strain ATCC 35469 / DSM 13698 / CCUG 18766 / IAM 14443 / JCM 21226 / LMG 7866 / NBRC 102419 / NCTC 12128 / CDC 0568-73) protein is 4-hydroxy-tetrahydrodipicolinate reductase.